A 226-amino-acid polypeptide reads, in one-letter code: Uridylate kinase (226 aa).

An ATP-binding site is contributed by 6-10 (KISGK). Residue Gly-43 coordinates UMP. ATP is bound by residues Gly-44 and Arg-48. Residues Asp-65 and 113–119 (FQPGQST) contribute to the UMP site. 4 residues coordinate ATP: Thr-139, Asn-140, Tyr-145, and Asp-148.

The protein belongs to the UMP kinase family. Homohexamer.

The protein resides in the cytoplasm. The enzyme catalyses UMP + ATP = UDP + ADP. It functions in the pathway pyrimidine metabolism; CTP biosynthesis via de novo pathway; UDP from UMP (UMPK route): step 1/1. Inhibited by UTP. Functionally, catalyzes the reversible phosphorylation of UMP to UDP. The sequence is that of Uridylate kinase from Sulfurisphaera tokodaii (strain DSM 16993 / JCM 10545 / NBRC 100140 / 7) (Sulfolobus tokodaii).